Here is a 419-residue protein sequence, read N- to C-terminus: Histidine--tRNA ligase (419 aa).

It belongs to the class-II aminoacyl-tRNA synthetase family. Homodimer.

It is found in the cytoplasm. It catalyses the reaction tRNA(His) + L-histidine + ATP = L-histidyl-tRNA(His) + AMP + diphosphate + H(+). In Desulforamulus reducens (strain ATCC BAA-1160 / DSM 100696 / MI-1) (Desulfotomaculum reducens), this protein is Histidine--tRNA ligase.